We begin with the raw amino-acid sequence, 112 residues long: DNA-binding protein Bv3F (112 aa).

Positions 65–92 (KRNSKRMSTVPKYRDPATGKTWSGRGRQ) are disordered. 2 DNA-binding regions span residues 89-94 (RGRQPA) and 89-95 (RGRQPAW).

This sequence belongs to the histone-like protein H-NS family. As to quaternary structure, homodimer that oligomerizes on DNA into higher-order complexes that form bridges between disparate regions of DNA compacting it.

The protein resides in the cytoplasm. It localises to the nucleoid. Functionally, a DNA-binding protein implicated in transcriptional repression and chromosome organization and compaction. Binds in the minor groove of AT-rich DNA. Binds nucleation sites in AT-rich DNA and bridges them, forming higher-order nucleoprotein complexes and condensing the chromosome. As many horizontally transferred genes are AT-rich, it plays a central role in silencing foreign genes. In Burkholderia vietnamiensis (strain G4 / LMG 22486) (Burkholderia cepacia (strain R1808)), this protein is DNA-binding protein Bv3F.